A 130-amino-acid chain; its full sequence is Phosphoribosyl-AMP cyclohydrolase (130 aa).

Residue Asp-77 participates in Mg(2+) binding. Residue Cys-78 participates in Zn(2+) binding. Residues Asp-79 and Asp-81 each contribute to the Mg(2+) site. Positions 95 and 102 each coordinate Zn(2+).

This sequence belongs to the PRA-CH family. Homodimer. Mg(2+) serves as cofactor. The cofactor is Zn(2+).

It localises to the cytoplasm. It carries out the reaction 1-(5-phospho-beta-D-ribosyl)-5'-AMP + H2O = 1-(5-phospho-beta-D-ribosyl)-5-[(5-phospho-beta-D-ribosylamino)methylideneamino]imidazole-4-carboxamide. It functions in the pathway amino-acid biosynthesis; L-histidine biosynthesis; L-histidine from 5-phospho-alpha-D-ribose 1-diphosphate: step 3/9. Functionally, catalyzes the hydrolysis of the adenine ring of phosphoribosyl-AMP. This Pseudomonas entomophila (strain L48) protein is Phosphoribosyl-AMP cyclohydrolase.